Reading from the N-terminus, the 361-residue chain is MRVLVAMSGGVDSSVAAARAVEAGHDVIGVHLALHKDAQQTREKARGCCSLEDSADARRICDKLGIPFYVWDFSEEFKEAVIGDFVDSYARGETPNPCLRCNEKIKFAALLRKGMALGFDAVATGHYATIDSDGYMRRSLDENKDQSYVLGVITKEELDHCFFPIGDTPKPQIREEAKRHGFSTAAKPDSYDICFIPDGNTQAFLGRSIGLRPGMIVDTEGNELKEHDGAWNYTIGQRKGLDIKTPTADGSPRYVTDIDAATGTVTVGSRADLAVTHIEADRLKYLHPAMEGDFDCEVQVRAHGSVVPCHAHVDREADRMTLELNEPLSGVARGQAAVLYLPSPDELGDIVLGSGTICGTE.

ATP is bound by residues 6–13 and leucine 32; that span reads AMSGGVDS. The Nucleophile role is filled by cysteine 101. Cysteine 101 and cysteine 194 are joined by a disulfide. Glycine 125 is an ATP binding site. An interaction with tRNA region spans residues 144 to 146; that stretch reads KDQ. Cysteine 194 (cysteine persulfide intermediate) is an active-site residue.

This sequence belongs to the MnmA/TRMU family.

It is found in the cytoplasm. The enzyme catalyses S-sulfanyl-L-cysteinyl-[protein] + uridine(34) in tRNA + AH2 + ATP = 2-thiouridine(34) in tRNA + L-cysteinyl-[protein] + A + AMP + diphosphate + H(+). Functionally, catalyzes the 2-thiolation of uridine at the wobble position (U34) of tRNA, leading to the formation of s(2)U34. This Corynebacterium aurimucosum (strain ATCC 700975 / DSM 44827 / CIP 107346 / CN-1) (Corynebacterium nigricans) protein is tRNA-specific 2-thiouridylase MnmA.